Reading from the N-terminus, the 234-residue chain is ATP synthase subunit a 1 (234 aa).

The next 6 helical transmembrane spans lie at 29-49 (FLVHVTHAWLIMLLLTGVALL), 90-110 (LIATLALFILFSNLIALIPGF), 116-136 (NLNTNAALALAVFGMTHVVGV), 147-167 (FVGPVWWLAPLILPIEIIGHL), 186-206 (IVLVIFFTLVPLLLPIPMMLM), and 207-227 (GILVAFIQTFVFTLLAMIYIA).

The protein belongs to the ATPase A chain family. In terms of assembly, F-type ATPases have 2 components, CF(1) - the catalytic core - and CF(0) - the membrane proton channel. CF(1) has five subunits: alpha(3), beta(3), gamma(1), delta(1), epsilon(1). CF(0) has three main subunits: a(1), b(2) and c(9-12). The alpha and beta chains form an alternating ring which encloses part of the gamma chain. CF(1) is attached to CF(0) by a central stalk formed by the gamma and epsilon chains, while a peripheral stalk is formed by the delta and b chains.

The protein resides in the cell inner membrane. Functionally, key component of the proton channel; it plays a direct role in the translocation of protons across the membrane. This chain is ATP synthase subunit a 1, found in Syntrophotalea carbinolica (strain DSM 2380 / NBRC 103641 / GraBd1) (Pelobacter carbinolicus).